The following is a 110-amino-acid chain: Phosphoribosyl-ATP pyrophosphatase (110 aa).

It belongs to the PRA-PH family.

It is found in the cytoplasm. The catalysed reaction is 1-(5-phospho-beta-D-ribosyl)-ATP + H2O = 1-(5-phospho-beta-D-ribosyl)-5'-AMP + diphosphate + H(+). It functions in the pathway amino-acid biosynthesis; L-histidine biosynthesis; L-histidine from 5-phospho-alpha-D-ribose 1-diphosphate: step 2/9. This chain is Phosphoribosyl-ATP pyrophosphatase, found in Pseudomonas fluorescens (strain ATCC BAA-477 / NRRL B-23932 / Pf-5).